Consider the following 267-residue polypeptide: Tryptophan synthase alpha chain (267 aa).

Active-site proton acceptor residues include glutamate 47 and aspartate 58.

The protein belongs to the TrpA family. As to quaternary structure, tetramer of two alpha and two beta chains.

The enzyme catalyses (1S,2R)-1-C-(indol-3-yl)glycerol 3-phosphate + L-serine = D-glyceraldehyde 3-phosphate + L-tryptophan + H2O. It functions in the pathway amino-acid biosynthesis; L-tryptophan biosynthesis; L-tryptophan from chorismate: step 5/5. The alpha subunit is responsible for the aldol cleavage of indoleglycerol phosphate to indole and glyceraldehyde 3-phosphate. In Chlorobaculum parvum (strain DSM 263 / NCIMB 8327) (Chlorobium vibrioforme subsp. thiosulfatophilum), this protein is Tryptophan synthase alpha chain.